Reading from the N-terminus, the 188-residue chain is Elongation factor P (188 aa).

This sequence belongs to the elongation factor P family.

It localises to the cytoplasm. The protein operates within protein biosynthesis; polypeptide chain elongation. Involved in peptide bond synthesis. Stimulates efficient translation and peptide-bond synthesis on native or reconstituted 70S ribosomes in vitro. Probably functions indirectly by altering the affinity of the ribosome for aminoacyl-tRNA, thus increasing their reactivity as acceptors for peptidyl transferase. The chain is Elongation factor P from Mycoplasma mobile (strain ATCC 43663 / 163K / NCTC 11711) (Mesomycoplasma mobile).